Reading from the N-terminus, the 187-residue chain is MATPTFDLADIKRRMQGAVNSLKHDLGSLRTGRASPTLLDPIQVEAYGAAMPMAQVATISVPEPRLLSVAVWDRGMVSAVEKAIRESDLGLNPMTEGQTIRLRIPEMNEQRRKEMVKVAHKYAEEARVAVRHVRRDGLDLLKKLEKDGAISQDDEKRQADQVQKVTDQHIAEVDQTLAAKEKEIMQV.

The protein belongs to the RRF family.

The protein localises to the cytoplasm. Functionally, responsible for the release of ribosomes from messenger RNA at the termination of protein biosynthesis. May increase the efficiency of translation by recycling ribosomes from one round of translation to another. The protein is Ribosome-recycling factor of Methylobacterium sp. (strain 4-46).